A 330-amino-acid chain; its full sequence is CRISPR-associated endonuclease Cas1 (330 aa).

Positions 154, 222, and 237 each coordinate Mn(2+).

The protein belongs to the CRISPR-associated endonuclease Cas1 family. In terms of assembly, homodimer, forms a heterotetramer with a Cas2 homodimer. Requires Mg(2+) as cofactor. Mn(2+) serves as cofactor.

Its function is as follows. CRISPR (clustered regularly interspaced short palindromic repeat), is an adaptive immune system that provides protection against mobile genetic elements (viruses, transposable elements and conjugative plasmids). CRISPR clusters contain spacers, sequences complementary to antecedent mobile elements, and target invading nucleic acids. CRISPR clusters are transcribed and processed into CRISPR RNA (crRNA). Acts as a dsDNA endonuclease. Involved in the integration of spacer DNA into the CRISPR cassette. This is CRISPR-associated endonuclease Cas1 from Clostridium perfringens (strain SM101 / Type A).